The primary structure comprises 446 residues: Tol-Pal system protein TolB (446 aa).

Residues 1-24 (MKRAFLSALSVGLAALFLTGPAQA) form the signal peptide.

The protein belongs to the TolB family. The Tol-Pal system is composed of five core proteins: the inner membrane proteins TolA, TolQ and TolR, the periplasmic protein TolB and the outer membrane protein Pal. They form a network linking the inner and outer membranes and the peptidoglycan layer.

Its subcellular location is the periplasm. Functionally, part of the Tol-Pal system, which plays a role in outer membrane invagination during cell division and is important for maintaining outer membrane integrity. In Dinoroseobacter shibae (strain DSM 16493 / NCIMB 14021 / DFL 12), this protein is Tol-Pal system protein TolB.